The following is a 162-amino-acid chain: NADH-quinone oxidoreductase subunit I (162 aa).

2 4Fe-4S ferredoxin-type domains span residues 53–83 and 93–122; these read LRRY…IESE and TRYD…ETHI. Positions 63, 66, 69, 73, 102, 105, 108, and 112 each coordinate [4Fe-4S] cluster.

It belongs to the complex I 23 kDa subunit family. As to quaternary structure, NDH-1 is composed of 14 different subunits. Subunits NuoA, H, J, K, L, M, N constitute the membrane sector of the complex. Requires [4Fe-4S] cluster as cofactor.

It is found in the cell inner membrane. It carries out the reaction a quinone + NADH + 5 H(+)(in) = a quinol + NAD(+) + 4 H(+)(out). Its function is as follows. NDH-1 shuttles electrons from NADH, via FMN and iron-sulfur (Fe-S) centers, to quinones in the respiratory chain. The immediate electron acceptor for the enzyme in this species is believed to be ubiquinone. Couples the redox reaction to proton translocation (for every two electrons transferred, four hydrogen ions are translocated across the cytoplasmic membrane), and thus conserves the redox energy in a proton gradient. This Herminiimonas arsenicoxydans protein is NADH-quinone oxidoreductase subunit I.